The following is a 153-amino-acid chain: Ribosomal RNA large subunit methyltransferase H (153 aa).

Residues Leu-63, Gly-102, and 121 to 126 (FGKITL) each bind S-adenosyl-L-methionine.

It belongs to the RNA methyltransferase RlmH family. Homodimer.

Its subcellular location is the cytoplasm. It catalyses the reaction pseudouridine(1915) in 23S rRNA + S-adenosyl-L-methionine = N(3)-methylpseudouridine(1915) in 23S rRNA + S-adenosyl-L-homocysteine + H(+). Its function is as follows. Specifically methylates the pseudouridine at position 1915 (m3Psi1915) in 23S rRNA. In Sulfurovum sp. (strain NBC37-1), this protein is Ribosomal RNA large subunit methyltransferase H.